Here is a 283-residue protein sequence, read N- to C-terminus: Digeranylgeranylglyceryl phosphate synthase (283 aa).

8 helical membrane-spanning segments follow: residues 5-27, 37-57, 85-105, 128-148, 152-172, 203-223, 228-248, and 263-283; these read VEII…AILA, AMLA…YFDY, LLFI…DTWI, PLIG…FAGY, EGLI…MTTA, AIIA…LYIY, INYL…AVLL, and LKTG…TITF.

Belongs to the UbiA prenyltransferase family. DGGGP synthase subfamily. Mg(2+) serves as cofactor.

Its subcellular location is the cell membrane. It carries out the reaction sn-3-O-(geranylgeranyl)glycerol 1-phosphate + (2E,6E,10E)-geranylgeranyl diphosphate = 2,3-bis-O-(geranylgeranyl)-sn-glycerol 1-phosphate + diphosphate. It participates in membrane lipid metabolism; glycerophospholipid metabolism. Its function is as follows. Prenyltransferase that catalyzes the transfer of the geranylgeranyl moiety of geranylgeranyl diphosphate (GGPP) to the C2 hydroxyl of (S)-3-O-geranylgeranylglyceryl phosphate (GGGP). This reaction is the second ether-bond-formation step in the biosynthesis of archaeal membrane lipids. This chain is Digeranylgeranylglyceryl phosphate synthase, found in Methanobrevibacter smithii (strain ATCC 35061 / DSM 861 / OCM 144 / PS).